The primary structure comprises 388 residues: Succinate--CoA ligase [ADP-forming] subunit beta (388 aa).

Residues Lys-46, 53-55 (GRG), Glu-99, Cys-102, and Glu-107 contribute to the ATP site. Asn-199 and Asp-213 together coordinate Mg(2+). Substrate-binding positions include Asn-264 and 321 to 323 (GIV).

The protein belongs to the succinate/malate CoA ligase beta subunit family. In terms of assembly, heterotetramer of two alpha and two beta subunits. It depends on Mg(2+) as a cofactor.

It catalyses the reaction succinate + ATP + CoA = succinyl-CoA + ADP + phosphate. It carries out the reaction GTP + succinate + CoA = succinyl-CoA + GDP + phosphate. It functions in the pathway carbohydrate metabolism; tricarboxylic acid cycle; succinate from succinyl-CoA (ligase route): step 1/1. Its function is as follows. Succinyl-CoA synthetase functions in the citric acid cycle (TCA), coupling the hydrolysis of succinyl-CoA to the synthesis of either ATP or GTP and thus represents the only step of substrate-level phosphorylation in the TCA. The beta subunit provides nucleotide specificity of the enzyme and binds the substrate succinate, while the binding sites for coenzyme A and phosphate are found in the alpha subunit. The sequence is that of Succinate--CoA ligase [ADP-forming] subunit beta from Actinobacillus pleuropneumoniae serotype 3 (strain JL03).